Consider the following 383-residue polypeptide: tRNA-specific 2-thiouridylase MnmA (383 aa).

ATP is bound by residues 29–36 and methionine 55; that span reads GMSGGVDS. Positions 115–117 are interaction with target base in tRNA; sequence NPD. Cysteine 120 functions as the Nucleophile in the catalytic mechanism. Cysteine 120 and cysteine 217 are oxidised to a cystine. Glycine 145 contacts ATP. The tract at residues 167–169 is interaction with tRNA; sequence KDQ. Cysteine 217 acts as the Cysteine persulfide intermediate in catalysis. Residues 329 to 330 are interaction with tRNA; sequence RY.

This sequence belongs to the MnmA/TRMU family.

It is found in the cytoplasm. It carries out the reaction S-sulfanyl-L-cysteinyl-[protein] + uridine(34) in tRNA + AH2 + ATP = 2-thiouridine(34) in tRNA + L-cysteinyl-[protein] + A + AMP + diphosphate + H(+). Functionally, catalyzes the 2-thiolation of uridine at the wobble position (U34) of tRNA, leading to the formation of s(2)U34. The sequence is that of tRNA-specific 2-thiouridylase MnmA from Pasteurella multocida (strain Pm70).